We begin with the raw amino-acid sequence, 37 residues long: Large ribosomal subunit protein bL36 (37 aa).

It belongs to the bacterial ribosomal protein bL36 family.

The chain is Large ribosomal subunit protein bL36 from Parasynechococcus marenigrum (strain WH8102).